The following is a 128-amino-acid chain: Insulin-like growth factor 2 (128 aa).

Residues 1–24 (MGISMGKSMLVLLTFLAFASCCIA) form the signal peptide. Residues 25-52 (AYRPSETLCGGELVDTLQFVCGDRGFYF) form a b region. 3 cysteine pairs are disulfide-bonded: Cys33-Cys71, Cys45-Cys84, and Cys70-Cys75. A c region spans residues 53–64 (SRPASRVSRRSR). Positions 65–85 (GIVEECCFRSCDLALLETYCA) are a. A d region spans residues 86-91 (TPAKSE). Residues 92–128 (RDVSASLAVLPDNFPRYPVGKFFQYDTWRQSTQRLRR) constitute a propeptide, e peptide.

The protein belongs to the insulin family. Interacts with MYORG; this interaction is required for IGF2 secretion. Interacts with integrins ITGAV:ITGB3 and ITGA6:ITGB4; integrin-binding is required for IGF2 signaling. Post-translationally, proteolytically processed by PCSK4, proIGF2 is cleaved at Arg-128 and Arg-92 to generate big-IGF2 and mature IGF2.

Its subcellular location is the secreted. In terms of biological role, the insulin-like growth factors possess growth-promoting activity. Major fetal growth hormone in mammals. Plays a key role in regulating fetoplacental development. IGF2 is influenced by placental lactogen. Also involved in tissue differentiation. In adults, involved in glucose metabolism in adipose tissue, skeletal muscle and liver. Acts as a ligand for integrin which is required for IGF2 signaling. Positively regulates myogenic transcription factor MYOD1 function by facilitating the recruitment of transcriptional coactivators, thereby controlling muscle terminal differentiation. Inhibits myoblast differentiation and metabolism via increasing the mitochondrial respiration rate. Its function is as follows. Preptin undergoes glucose-mediated co-secretion with insulin, and acts as a physiological amplifier of glucose-mediated insulin secretion. Exhibits osteogenic properties by increasing osteoblast mitogenic activity through phosphoactivation of MAPK1 and MAPK3. The polypeptide is Insulin-like growth factor 2 (Cavia porcellus (Guinea pig)).